A 209-amino-acid polypeptide reads, in one-letter code: 3-demethoxyubiquinol 3-hydroxylase (209 aa).

Residues Glu58, Glu88, His91, Glu140, Glu172, and His175 each contribute to the Fe cation site.

The protein belongs to the COQ7 family. Fe cation serves as cofactor.

The protein localises to the cell membrane. The catalysed reaction is a 5-methoxy-2-methyl-3-(all-trans-polyprenyl)benzene-1,4-diol + AH2 + O2 = a 3-demethylubiquinol + A + H2O. It participates in cofactor biosynthesis; ubiquinone biosynthesis. Functionally, catalyzes the hydroxylation of 2-nonaprenyl-3-methyl-6-methoxy-1,4-benzoquinol during ubiquinone biosynthesis. This is 3-demethoxyubiquinol 3-hydroxylase from Polynucleobacter asymbioticus (strain DSM 18221 / CIP 109841 / QLW-P1DMWA-1) (Polynucleobacter necessarius subsp. asymbioticus).